We begin with the raw amino-acid sequence, 146 residues long: MEINREEFSEVVVNIGRVTKVVKGGRRFRFNALVVVGNKNGLVGFGLGKAKEVPDAIKKAIDDAFKNIIKVNIKGTTIAHDIEHKYNASRILLKPASEGTGVIAGGSTRPVIELAGIKDILTKSLGSNNPYNVVRATIDALARIKA.

One can recognise an S5 DRBM domain in the interval 8-71 (FSEVVVNIGR…DDAFKNIIKV (64 aa)).

Belongs to the universal ribosomal protein uS5 family. As to quaternary structure, part of the 30S ribosomal subunit. Contacts proteins S4 and S8.

Functionally, with S4 and S12 plays an important role in translational accuracy. In terms of biological role, located at the back of the 30S subunit body where it stabilizes the conformation of the head with respect to the body. The protein is Small ribosomal subunit protein uS5 of Helicobacter hepaticus (strain ATCC 51449 / 3B1).